Consider the following 288-residue polypeptide: Probable proteasome subunit alpha type-7 (288 aa).

Thr2 is modified (N-acetylthreonine). A disordered region spans residues 247-288 (INGDDDEDEDDSDNVMSSDDENAPVATNANATTDQEGDIHLE). Residues 249–268 (GDDDEDEDDSDNVMSSDDEN) show a composition bias toward acidic residues. Over residues 269–279 (APVATNANATT) the composition is skewed to low complexity.

The protein belongs to the peptidase T1A family. The 26S proteasome consists of a 20S proteasome core and two 19S regulatory subunits. The 20S proteasome core is composed of 28 subunits that are arranged in four stacked rings, resulting in a barrel-shaped structure. The two end rings are each formed by seven alpha subunits, and the two central rings are each formed by seven beta subunits. The catalytic chamber with the active sites is on the inside of the barrel. Post-translationally, the alpha and beta forms are probably products of the same gene with different post-translational modifications.

It localises to the cytoplasm. It is found in the nucleus. The proteasome degrades poly-ubiquitinated proteins in the cytoplasm and in the nucleus. It is essential for the regulated turnover of proteins and for the removal of misfolded proteins. The proteasome is a multicatalytic proteinase complex that is characterized by its ability to cleave peptides with Arg, Phe, Tyr, Leu, and Glu adjacent to the leaving group at neutral or slightly basic pH. It has an ATP-dependent proteolytic activity. The polypeptide is Probable proteasome subunit alpha type-7 (PRE10) (Saccharomyces cerevisiae (strain ATCC 204508 / S288c) (Baker's yeast)).